Here is a 478-residue protein sequence, read N- to C-terminus: Ribulose bisphosphate carboxylase large chain (478 aa).

A propeptide spanning residues 1–2 is cleaved from the precursor; it reads MS. Substrate contacts are provided by Asn123 and Thr173. Lys175 (proton acceptor) is an active-site residue. Position 177 (Lys177) interacts with substrate. Residues Lys201, Asp203, and Glu204 each contribute to the Mg(2+) site. Residue Lys201 is modified to N6-carboxylysine. Ser208 is modified (phosphoserine). Catalysis depends on His294, which acts as the Proton acceptor. Arg295 and His327 together coordinate substrate. Thr330 carries the phosphothreonine modification. Ser379 contributes to the substrate binding site.

It belongs to the RuBisCO large chain family. Type I subfamily. In terms of assembly, heterohexadecamer of 8 large chains and 8 small chains; disulfide-linked. The disulfide link is formed within the large subunit homodimers. The cofactor is Mg(2+). In terms of processing, the disulfide bond which can form in the large chain dimeric partners within the hexadecamer appears to be associated with oxidative stress and protein turnover.

The protein resides in the plastid. It localises to the chloroplast. The catalysed reaction is 2 (2R)-3-phosphoglycerate + 2 H(+) = D-ribulose 1,5-bisphosphate + CO2 + H2O. It catalyses the reaction D-ribulose 1,5-bisphosphate + O2 = 2-phosphoglycolate + (2R)-3-phosphoglycerate + 2 H(+). In terms of biological role, ruBisCO catalyzes two reactions: the carboxylation of D-ribulose 1,5-bisphosphate, the primary event in carbon dioxide fixation, as well as the oxidative fragmentation of the pentose substrate in the photorespiration process. Both reactions occur simultaneously and in competition at the same active site. In Lepidium virginicum (Virginia pepperweed), this protein is Ribulose bisphosphate carboxylase large chain.